A 244-amino-acid chain; its full sequence is NAD-dependent protein deacylase SIR2rp3 (244 aa).

A Deacetylase sirtuin-type domain is found at 1–239 (MRRPNGMIAI…PAWADEVLHG (239 aa)). 13-32 (GAGISAESGISTFRDQNGLW) contacts NAD(+). Residues Y57 and R60 each coordinate substrate. 95–98 (QNID) lines the NAD(+) pocket. The active-site Proton acceptor is H113. Zn(2+) is bound by residues C121 and C141. NAD(+)-binding positions include 181–183 (GTS) and A225.

It belongs to the sirtuin family. Class III subfamily. Requires Zn(2+) as cofactor.

Its subcellular location is the mitochondrion. It carries out the reaction N(6)-malonyl-L-lysyl-[protein] + NAD(+) + H2O = 2''-O-malonyl-ADP-D-ribose + nicotinamide + L-lysyl-[protein]. It catalyses the reaction N(6)-succinyl-L-lysyl-[protein] + NAD(+) + H2O = 2''-O-succinyl-ADP-D-ribose + nicotinamide + L-lysyl-[protein]. The catalysed reaction is N(6)-glutaryl-L-lysyl-[protein] + NAD(+) + H2O = 2''-O-glutaryl-ADP-D-ribose + nicotinamide + L-lysyl-[protein]. NAD-dependent lysine demalonylase, desuccinylase and deglutarylase that specifically removes malonyl, succinyl and glutaryl groups on target proteins. Has weak NAD-dependent protein deacetylase activity; however this activity may not be physiologically relevant in vivo. In Trypanosoma brucei brucei (strain 927/4 GUTat10.1), this protein is NAD-dependent protein deacylase SIR2rp3 (SIR2rp3).